The following is a 341-amino-acid chain: Holliday junction branch migration complex subunit RuvB (341 aa).

The large ATPase domain (RuvB-L) stretch occupies residues 4–185 (TDRLIVPTAV…FGIVARLEFY (182 aa)). Residues Leu24, Arg25, Gly66, Lys69, Thr70, Thr71, 132 to 134 (EDF), Arg175, Tyr185, and Arg222 each bind ATP. Mg(2+) is bound at residue Thr70. The small ATPAse domain (RuvB-S) stretch occupies residues 186–256 (SAEELGYIVH…VADAALVMLD (71 aa)). A head domain (RuvB-H) region spans residues 259-341 (RAGLDVMDRK…ATPASDAELF (83 aa)). The DNA site is built by Arg295, Arg314, and Arg319.

It belongs to the RuvB family. Homohexamer. Forms an RuvA(8)-RuvB(12)-Holliday junction (HJ) complex. HJ DNA is sandwiched between 2 RuvA tetramers; dsDNA enters through RuvA and exits via RuvB. An RuvB hexamer assembles on each DNA strand where it exits the tetramer. Each RuvB hexamer is contacted by two RuvA subunits (via domain III) on 2 adjacent RuvB subunits; this complex drives branch migration. In the full resolvosome a probable DNA-RuvA(4)-RuvB(12)-RuvC(2) complex forms which resolves the HJ.

The protein resides in the cytoplasm. The catalysed reaction is ATP + H2O = ADP + phosphate + H(+). Functionally, the RuvA-RuvB-RuvC complex processes Holliday junction (HJ) DNA during genetic recombination and DNA repair, while the RuvA-RuvB complex plays an important role in the rescue of blocked DNA replication forks via replication fork reversal (RFR). RuvA specifically binds to HJ cruciform DNA, conferring on it an open structure. The RuvB hexamer acts as an ATP-dependent pump, pulling dsDNA into and through the RuvAB complex. RuvB forms 2 homohexamers on either side of HJ DNA bound by 1 or 2 RuvA tetramers; 4 subunits per hexamer contact DNA at a time. Coordinated motions by a converter formed by DNA-disengaged RuvB subunits stimulates ATP hydrolysis and nucleotide exchange. Immobilization of the converter enables RuvB to convert the ATP-contained energy into a lever motion, pulling 2 nucleotides of DNA out of the RuvA tetramer per ATP hydrolyzed, thus driving DNA branch migration. The RuvB motors rotate together with the DNA substrate, which together with the progressing nucleotide cycle form the mechanistic basis for DNA recombination by continuous HJ branch migration. Branch migration allows RuvC to scan DNA until it finds its consensus sequence, where it cleaves and resolves cruciform DNA. The chain is Holliday junction branch migration complex subunit RuvB from Thiobacillus denitrificans (strain ATCC 25259 / T1).